Consider the following 487-residue polypeptide: Probable glycine dehydrogenase (decarboxylating) subunit 2 (487 aa).

K269 carries the N6-(pyridoxal phosphate)lysine modification.

The protein belongs to the GcvP family. C-terminal subunit subfamily. As to quaternary structure, the glycine cleavage system is composed of four proteins: P, T, L and H. In this organism, the P 'protein' is a heterodimer of two subunits. Pyridoxal 5'-phosphate serves as cofactor.

The enzyme catalyses N(6)-[(R)-lipoyl]-L-lysyl-[glycine-cleavage complex H protein] + glycine + H(+) = N(6)-[(R)-S(8)-aminomethyldihydrolipoyl]-L-lysyl-[glycine-cleavage complex H protein] + CO2. The glycine cleavage system catalyzes the degradation of glycine. The P protein binds the alpha-amino group of glycine through its pyridoxal phosphate cofactor; CO(2) is released and the remaining methylamine moiety is then transferred to the lipoamide cofactor of the H protein. The polypeptide is Probable glycine dehydrogenase (decarboxylating) subunit 2 (Prosthecochloris aestuarii (strain DSM 271 / SK 413)).